Here is a 91-residue protein sequence, read N- to C-terminus: Putative septation protein SpoVG (91 aa).

It belongs to the SpoVG family.

Functionally, could be involved in septation. The protein is Putative septation protein SpoVG of Clostridium beijerinckii (strain ATCC 51743 / NCIMB 8052) (Clostridium acetobutylicum).